The sequence spans 213 residues: Pyridoxine/pyridoxamine 5'-phosphate oxidase (213 aa).

Substrate contacts are provided by residues 8-11 (RREY) and lysine 66. FMN contacts are provided by residues 61 to 66 (RIVLLK), 76 to 77 (YT), arginine 82, lysine 83, and glutamine 105. Tyrosine 123, arginine 127, and serine 131 together coordinate substrate. Residues 140–141 (QS) and tryptophan 185 each bind FMN. Residue 191-193 (RLH) participates in substrate binding. Arginine 195 lines the FMN pocket.

The protein belongs to the pyridoxamine 5'-phosphate oxidase family. In terms of assembly, homodimer. FMN is required as a cofactor.

The catalysed reaction is pyridoxamine 5'-phosphate + O2 + H2O = pyridoxal 5'-phosphate + H2O2 + NH4(+). The enzyme catalyses pyridoxine 5'-phosphate + O2 = pyridoxal 5'-phosphate + H2O2. Its pathway is cofactor metabolism; pyridoxal 5'-phosphate salvage; pyridoxal 5'-phosphate from pyridoxamine 5'-phosphate: step 1/1. The protein operates within cofactor metabolism; pyridoxal 5'-phosphate salvage; pyridoxal 5'-phosphate from pyridoxine 5'-phosphate: step 1/1. Its function is as follows. Catalyzes the oxidation of either pyridoxine 5'-phosphate (PNP) or pyridoxamine 5'-phosphate (PMP) into pyridoxal 5'-phosphate (PLP). This Pseudoalteromonas atlantica (strain T6c / ATCC BAA-1087) protein is Pyridoxine/pyridoxamine 5'-phosphate oxidase.